The following is a 37-amino-acid chain: Large ribosomal subunit protein bL36 (37 aa).

Belongs to the bacterial ribosomal protein bL36 family.

The polypeptide is Large ribosomal subunit protein bL36 (Tropheryma whipplei (strain Twist) (Whipple's bacillus)).